A 71-amino-acid chain; its full sequence is Small ribosomal subunit protein bS21 (71 aa).

It belongs to the bacterial ribosomal protein bS21 family.

The sequence is that of Small ribosomal subunit protein bS21 from Psychromonas ingrahamii (strain DSM 17664 / CCUG 51855 / 37).